Consider the following 261-residue polypeptide: Ribonuclease 3 (261 aa).

The 125-residue stretch at Tyr-20–Gly-144 folds into the RNase III domain. Residue Glu-62 participates in Mg(2+) binding. Asp-66 is a catalytic residue. The Mg(2+) site is built by Asn-130 and Glu-133. Glu-133 is a catalytic residue. The 70-residue stretch at Asn-172 to Thr-241 folds into the DRBM domain.

Belongs to the ribonuclease III family. In terms of assembly, homodimer. Mg(2+) is required as a cofactor.

The protein localises to the cytoplasm. It catalyses the reaction Endonucleolytic cleavage to 5'-phosphomonoester.. Its function is as follows. Digests double-stranded RNA. Involved in the processing of primary rRNA transcript to yield the immediate precursors to the large and small rRNAs (23S and 16S). Processes some mRNAs, and tRNAs when they are encoded in the rRNA operon. Processes pre-crRNA and tracrRNA of type II CRISPR loci if present in the organism. The chain is Ribonuclease 3 from Azobacteroides pseudotrichonymphae genomovar. CFP2.